Reading from the N-terminus, the 553-residue chain is Terpene synthase 16 (553 aa).

Residues aspartate 303, aspartate 307, and glutamate 457 each contribute to the Mg(2+) site. The DDXXD motif motif lies at 303–307 (DDTYD).

Belongs to the terpene synthase family. Tpsa subfamily. It depends on Mg(2+) as a cofactor. Mn(2+) serves as cofactor. In terms of tissue distribution, expressed in leaves, trichomes and flowers.

Its pathway is secondary metabolite biosynthesis; terpenoid biosynthesis. Functionally, sesquiterpene synthase involved in the biosynthesis of volatile compounds. No activity detected with geranyl diphosphate (GPP) and farnesyl diphosphate (FPP) as substrates. The polypeptide is Terpene synthase 16 (Solanum lycopersicum (Tomato)).